Consider the following 756-residue polypeptide: ATP-dependent zinc metalloprotease FtsH (756 aa).

Topologically, residues 1–44 (MGVPAGMPHPNGLQPQRKDKALAQNPNTPQKGSEAFLKKLIHSS) are cytoplasmic. Residues 45–65 (WFFPGAAIVVMLGFLMASFFT) form a helical membrane-spanning segment. Residues 66-148 (QPSRQVDTNV…SYTDQPVEHS (83 aa)) are Extracellular-facing. Residues 149 to 169 (FLGSLVSLLLPILLFGVLFWF) form a helical membrane-spanning segment. Residues 170–756 (LMGRVGGGSS…NQNGAENERG (587 aa)) lie on the Cytoplasmic side of the membrane. 241–248 (GPPGTGKT) is a binding site for ATP. Zn(2+) is bound at residue His463. The active site involves Glu464. The Zn(2+) site is built by His467 and Asp539. 2 stretches are compositionally biased toward basic and acidic residues: residues 647–662 (PERE…ERTD) and 672–681 (LAKEAEKSEE). A disordered region spans residues 647–756 (PEREHWYSKP…NQNGAENERG (110 aa)). Low complexity-rich tracts occupy residues 684 to 703 (AEAP…VPVA) and 713 to 724 (PLTDPDADPTVA). The segment covering 744–756 (GTPNQNGAENERG) has biased composition (polar residues).

It in the central section; belongs to the AAA ATPase family. The protein in the C-terminal section; belongs to the peptidase M41 family. Homohexamer. Requires Zn(2+) as cofactor.

The protein localises to the cell membrane. In terms of biological role, acts as a processive, ATP-dependent zinc metallopeptidase for both cytoplasmic and membrane proteins. Plays a role in the quality control of integral membrane proteins. The sequence is that of ATP-dependent zinc metalloprotease FtsH from Rothia mucilaginosa (strain DY-18) (Stomatococcus mucilaginosus).